The sequence spans 276 residues: S-adenosylmethionine decarboxylase proenzyme (276 aa).

Ser124 (schiff-base intermediate with substrate; via pyruvic acid) is an active-site residue. Residue Ser124 is modified to Pyruvic acid (Ser); by autocatalysis. His129 functions as the Proton acceptor; for processing activity in the catalytic mechanism. Catalysis depends on Cys152, which acts as the Proton donor; for catalytic activity.

It belongs to the prokaryotic AdoMetDC family. Type 2 subfamily. In terms of assembly, heterooctamer of four alpha and four beta chains arranged as a tetramer of alpha/beta heterodimers. Pyruvate is required as a cofactor. Post-translationally, is synthesized initially as an inactive proenzyme. Formation of the active enzyme involves a self-maturation process in which the active site pyruvoyl group is generated from an internal serine residue via an autocatalytic post-translational modification. Two non-identical subunits are generated from the proenzyme in this reaction, and the pyruvate is formed at the N-terminus of the alpha chain, which is derived from the carboxyl end of the proenzyme. The post-translation cleavage follows an unusual pathway, termed non-hydrolytic serinolysis, in which the side chain hydroxyl group of the serine supplies its oxygen atom to form the C-terminus of the beta chain, while the remainder of the serine residue undergoes an oxidative deamination to produce ammonia and the pyruvoyl group blocking the N-terminus of the alpha chain.

The enzyme catalyses S-adenosyl-L-methionine + H(+) = S-adenosyl 3-(methylsulfanyl)propylamine + CO2. The protein operates within amine and polyamine biosynthesis; S-adenosylmethioninamine biosynthesis; S-adenosylmethioninamine from S-adenosyl-L-methionine: step 1/1. Functionally, catalyzes the decarboxylation of S-adenosylmethionine to S-adenosylmethioninamine (dcAdoMet), the propylamine donor required for the synthesis of the polyamines spermine and spermidine from the diamine putrescine. The polypeptide is S-adenosylmethionine decarboxylase proenzyme (Desulfitobacterium hafniense (strain Y51)).